We begin with the raw amino-acid sequence, 290 residues long: Shikimate dehydrogenase (NADP(+)) (290 aa).

Residues 20 to 22 (SLS) and T67 each bind shikimate. K71 acts as the Proton acceptor in catalysis. Residues N92 and D107 each contribute to the shikimate site. NADP(+) is bound by residues 132–136 (GAGGA) and M228. Residue Y230 coordinates shikimate. Residue G251 coordinates NADP(+).

It belongs to the shikimate dehydrogenase family. As to quaternary structure, homodimer.

The catalysed reaction is shikimate + NADP(+) = 3-dehydroshikimate + NADPH + H(+). The protein operates within metabolic intermediate biosynthesis; chorismate biosynthesis; chorismate from D-erythrose 4-phosphate and phosphoenolpyruvate: step 4/7. Its function is as follows. Involved in the biosynthesis of the chorismate, which leads to the biosynthesis of aromatic amino acids. Catalyzes the reversible NADPH linked reduction of 3-dehydroshikimate (DHSA) to yield shikimate (SA). The polypeptide is Shikimate dehydrogenase (NADP(+)) (Citrifermentans bemidjiense (strain ATCC BAA-1014 / DSM 16622 / JCM 12645 / Bem) (Geobacter bemidjiensis)).